The chain runs to 375 residues: Chaperone protein DnaJ (375 aa).

The 66-residue stretch at D5 to G70 folds into the J domain. The CR-type zinc-finger motif lies at G136–I214. C149, C152, C166, C169, C188, C191, C202, and C205 together coordinate Zn(2+). 4 CXXCXGXG motif repeats span residues C149–G156, C166–G173, C188–G195, and C202–G209.

The protein belongs to the DnaJ family. As to quaternary structure, homodimer. The cofactor is Zn(2+).

The protein localises to the cytoplasm. Functionally, participates actively in the response to hyperosmotic and heat shock by preventing the aggregation of stress-denatured proteins and by disaggregating proteins, also in an autonomous, DnaK-independent fashion. Unfolded proteins bind initially to DnaJ; upon interaction with the DnaJ-bound protein, DnaK hydrolyzes its bound ATP, resulting in the formation of a stable complex. GrpE releases ADP from DnaK; ATP binding to DnaK triggers the release of the substrate protein, thus completing the reaction cycle. Several rounds of ATP-dependent interactions between DnaJ, DnaK and GrpE are required for fully efficient folding. Also involved, together with DnaK and GrpE, in the DNA replication of plasmids through activation of initiation proteins. This is Chaperone protein DnaJ from Oleidesulfovibrio alaskensis (strain ATCC BAA-1058 / DSM 17464 / G20) (Desulfovibrio alaskensis).